The chain runs to 150 residues: D-aminoacyl-tRNA deacylase (150 aa).

The short motif at 136-137 is the Gly-cisPro motif, important for rejection of L-amino acids element; it reads GP.

This sequence belongs to the DTD family. Homodimer.

The protein localises to the cytoplasm. It catalyses the reaction glycyl-tRNA(Ala) + H2O = tRNA(Ala) + glycine + H(+). The enzyme catalyses a D-aminoacyl-tRNA + H2O = a tRNA + a D-alpha-amino acid + H(+). Its function is as follows. An aminoacyl-tRNA editing enzyme that deacylates mischarged D-aminoacyl-tRNAs. Also deacylates mischarged glycyl-tRNA(Ala), protecting cells against glycine mischarging by AlaRS. Acts via tRNA-based rather than protein-based catalysis; rejects L-amino acids rather than detecting D-amino acids in the active site. By recycling D-aminoacyl-tRNA to D-amino acids and free tRNA molecules, this enzyme counteracts the toxicity associated with the formation of D-aminoacyl-tRNA entities in vivo and helps enforce protein L-homochirality. The polypeptide is D-aminoacyl-tRNA deacylase (Staphylococcus epidermidis (strain ATCC 35984 / DSM 28319 / BCRC 17069 / CCUG 31568 / BM 3577 / RP62A)).